The chain runs to 466 residues: Histidine--tRNA ligase (466 aa).

This sequence belongs to the class-II aminoacyl-tRNA synthetase family. In terms of assembly, homodimer.

The protein localises to the cytoplasm. It carries out the reaction tRNA(His) + L-histidine + ATP = L-histidyl-tRNA(His) + AMP + diphosphate + H(+). In Xylella fastidiosa (strain M12), this protein is Histidine--tRNA ligase.